Here is a 42-residue protein sequence, read N- to C-terminus: Photosystem II reaction center protein J (42 aa).

The helical transmembrane segment at 10–30 (IPLWLVGTVVGTLALGLVALF) threads the bilayer.

It belongs to the PsbJ family. PSII is composed of 1 copy each of membrane proteins PsbA, PsbB, PsbC, PsbD, PsbE, PsbF, PsbH, PsbI, PsbJ, PsbK, PsbL, PsbM, PsbT, PsbX, PsbY, PsbZ, Psb30/Ycf12, at least 3 peripheral proteins of the oxygen-evolving complex and a large number of cofactors. It forms dimeric complexes.

It is found in the plastid. Its subcellular location is the chloroplast thylakoid membrane. In terms of biological role, one of the components of the core complex of photosystem II (PSII). PSII is a light-driven water:plastoquinone oxidoreductase that uses light energy to abstract electrons from H(2)O, generating O(2) and a proton gradient subsequently used for ATP formation. It consists of a core antenna complex that captures photons, and an electron transfer chain that converts photonic excitation into a charge separation. In Oltmannsiellopsis viridis (Marine flagellate), this protein is Photosystem II reaction center protein J.